The following is a 132-amino-acid chain: HLA class I histocompatibility antigen protein P5 (132 aa).

In terms of tissue distribution, expressed in lymphoid tissues; Detected in spleen as well as in B-cell lines, NK cell lines and activated lymphocytes.

The sequence is that of HLA class I histocompatibility antigen protein P5 (HCP5) from Homo sapiens (Human).